A 164-amino-acid polypeptide reads, in one-letter code: Thiol peroxidase (164 aa).

The region spanning 17 to 162 (IKVGDTFPDF…YDEVLQAAQA (146 aa)) is the Thioredoxin domain. Residue C58 is the Cysteine sulfenic acid (-SOH) intermediate of the active site. C58 and C92 are oxidised to a cystine.

Belongs to the peroxiredoxin family. Tpx subfamily. In terms of assembly, homodimer.

It carries out the reaction a hydroperoxide + [thioredoxin]-dithiol = an alcohol + [thioredoxin]-disulfide + H2O. In terms of biological role, thiol-specific peroxidase that catalyzes the reduction of hydrogen peroxide and organic hydroperoxides to water and alcohols, respectively. Plays a role in cell protection against oxidative stress by detoxifying peroxides. The chain is Thiol peroxidase from Clostridium acetobutylicum (strain ATCC 824 / DSM 792 / JCM 1419 / IAM 19013 / LMG 5710 / NBRC 13948 / NRRL B-527 / VKM B-1787 / 2291 / W).